A 129-amino-acid polypeptide reads, in one-letter code: Large ribosomal subunit protein uL22 (129 aa).

It belongs to the universal ribosomal protein uL22 family. As to quaternary structure, part of the 50S ribosomal subunit.

In terms of biological role, this protein binds specifically to 23S rRNA; its binding is stimulated by other ribosomal proteins, e.g. L4, L17, and L20. It is important during the early stages of 50S assembly. It makes multiple contacts with different domains of the 23S rRNA in the assembled 50S subunit and ribosome. Functionally, the globular domain of the protein is located near the polypeptide exit tunnel on the outside of the subunit, while an extended beta-hairpin is found that lines the wall of the exit tunnel in the center of the 70S ribosome. The polypeptide is Large ribosomal subunit protein uL22 (Bartonella henselae (strain ATCC 49882 / DSM 28221 / CCUG 30454 / Houston 1) (Rochalimaea henselae)).